Here is a 327-residue protein sequence, read N- to C-terminus: RNA ligase 1 (327 aa).

Requires Mg(2+) as cofactor. It depends on Mn(2+) as a cofactor. AMPylates itself (auto-AMPylation).

It carries out the reaction ATP + (ribonucleotide)n-3'-hydroxyl + 5'-phospho-(ribonucleotide)m = (ribonucleotide)n+m + AMP + diphosphate.. Functionally, functions as an RNA ligase, in vitro. The ligation reaction entails three nucleotidyl transfer steps. In the first step, the RNA ligase reacts with ATP in the absence of nucleic acid to form a covalent ligase-AMP intermediate and release pyrophosphate. In step 2, the ligase-AMP binds to the nucleic acid and transfers the adenylate to the 5'-PO4 terminus to form an adenylylated intermediate. In step 3, the RNA ligase directs the attack of the 3'-OH on the 5'-phosphoanhydride linkage, resulting in a repaired 3'-5' phosphodiester and release of AMP. Exhibits selectivity for single-stranded RNA substrates and may not have nick-sealing activity on double-stranded DNA-RNA hybrids. May play a role in maintaining RNA integrity under stress conditions, for example in response to reactive oxygen species (ROS). The chain is RNA ligase 1 from Mus musculus (Mouse).